The following is a 96-amino-acid chain: Putative regulatory protein Teth514_1762 (96 aa).

This sequence belongs to the RemA family.

This is Putative regulatory protein Teth514_1762 from Thermoanaerobacter sp. (strain X514).